The primary structure comprises 820 residues: DNA mismatch repair protein MutS (820 aa).

Position 618 to 625 (618 to 625 (GPNMAGKS)) interacts with ATP.

Belongs to the DNA mismatch repair MutS family.

Functionally, this protein is involved in the repair of mismatches in DNA. It is possible that it carries out the mismatch recognition step. This protein has a weak ATPase activity. The chain is DNA mismatch repair protein MutS from Chlamydia trachomatis serovar L2b (strain UCH-1/proctitis).